The following is a 485-amino-acid chain: Probable protein phosphatase 2C 3 (485 aa).

Residues 1 to 11 (MSSPSPSSEAA) are compositionally biased toward low complexity. Disordered stretches follow at residues 1-29 (MSSP…AAGG) and 43-72 (ARAE…AEGG). The span at 13–23 (AHHHHHQRRQH) shows a compositional bias: basic residues. The 247-residue stretch at 107–353 (SSSSSSSLAS…DDTTCIVVDM (247 aa)) folds into the PPM-type phosphatase domain. Mn(2+) is bound by residues Asp-129, Gly-130, Asp-305, and Asp-344.

Belongs to the PP2C family. Mg(2+) serves as cofactor. It depends on Mn(2+) as a cofactor.

The catalysed reaction is O-phospho-L-seryl-[protein] + H2O = L-seryl-[protein] + phosphate. It catalyses the reaction O-phospho-L-threonyl-[protein] + H2O = L-threonyl-[protein] + phosphate. The polypeptide is Probable protein phosphatase 2C 3 (Oryza sativa subsp. japonica (Rice)).